A 408-amino-acid polypeptide reads, in one-letter code: uncharacterized protein (408 aa).

Belongs to the protein kinase superfamily. ADCK protein kinase family.

This is an uncharacterized protein from Synechocystis sp. (strain ATCC 27184 / PCC 6803 / Kazusa).